The following is a 343-amino-acid chain: Shematrin-like protein 3 (343 aa).

The signal sequence occupies residues 1 to 16; the sequence is MLKLVCAVVLIATVNA.

Prismatic layer of shell (at protein level).

It localises to the secreted. The protein is Shematrin-like protein 3 of Pinctada maxima (Silver-lipped pearl oyster).